Here is a 182-residue protein sequence, read N- to C-terminus: MFKRSIIQQSRLFSNSASRLGKKVFFDPAVNGTKIGRIEFELYDNVVPKTAENFRALCTGEKGWGYKGVPFHRIIPDFMIQGGDTDLTNGFGGKSIYGSKFADENFVKKHDKAGLLSMANAGPNTNGSQFFITTVPCPWLDGKHVVFGEVTKGMDIVKAIESYGTASGKPRAEIVIEEAGEL.

Residues 1 to 20 constitute a mitochondrion transit peptide; it reads MFKRSIIQQSRLFSNSASRL. A PPIase cyclophilin-type domain is found at 25–181; sequence FFDPAVNGTK…AEIVIEEAGE (157 aa).

It belongs to the cyclophilin-type PPIase family.

It localises to the mitochondrion matrix. It catalyses the reaction [protein]-peptidylproline (omega=180) = [protein]-peptidylproline (omega=0). Its activity is regulated as follows. Inhibited by the immunosuppressant drug cyclosporin A and by SDZ NIM811, a PPIase inhibitor. Functionally, PPIases accelerate the folding of proteins. It catalyzes the cis-trans isomerization of proline imidic peptide bonds in oligopeptides. This isozyme is required for growth on lactate at high temperature. This chain is Peptidyl-prolyl cis-trans isomerase C, mitochondrial (CPR3), found in Saccharomyces cerevisiae (strain ATCC 204508 / S288c) (Baker's yeast).